Reading from the N-terminus, the 118-residue chain is NADH-quinone oxidoreductase subunit A 2 (118 aa).

Helical transmembrane passes span 5–25 (YLPI…SLVF), 60–80 (FYII…LYPW), and 87–107 (LGMF…VGYI).

Belongs to the complex I subunit 3 family. NDH-1 is composed of 14 different subunits. Subunits NuoA, H, J, K, L, M, N constitute the membrane sector of the complex.

Its subcellular location is the cell inner membrane. It carries out the reaction a quinone + NADH + 5 H(+)(in) = a quinol + NAD(+) + 4 H(+)(out). NDH-1 shuttles electrons from NADH, via FMN and iron-sulfur (Fe-S) centers, to quinones in the respiratory chain. The immediate electron acceptor for the enzyme in this species is believed to be ubiquinone. Couples the redox reaction to proton translocation (for every two electrons transferred, four hydrogen ions are translocated across the cytoplasmic membrane), and thus conserves the redox energy in a proton gradient. In Geobacter metallireducens (strain ATCC 53774 / DSM 7210 / GS-15), this protein is NADH-quinone oxidoreductase subunit A 2.